We begin with the raw amino-acid sequence, 942 residues long: DNA polymerase I (942 aa).

The 5'-3' exonuclease domain occupies 177–269 (EPDQLADLRG…LEAARIGVYD (93 aa)). A 3'-5' exonuclease domain is found at 340 to 522 (TIVRDATALA…LTERLQRQLE (183 aa)).

Belongs to the DNA polymerase type-A family. Single-chain monomer with multiple functions.

It carries out the reaction DNA(n) + a 2'-deoxyribonucleoside 5'-triphosphate = DNA(n+1) + diphosphate. In terms of biological role, in addition to polymerase activity, this DNA polymerase exhibits 3'-5' and 5'-3' exonuclease activity. This Chloroflexus aurantiacus (strain ATCC 29366 / DSM 635 / J-10-fl) protein is DNA polymerase I (polA).